The sequence spans 325 residues: Natural cytotoxicity triggering receptor 1 (325 aa).

Positions methionine 1–serine 16 are cleaved as a signal peptide. The Extracellular portion of the chain corresponds to glutamine 17 to arginine 258. Ig-like domains follow at residues glycine 42 to tyrosine 100 and glycine 137 to glycine 192. Residues cysteine 49 and cysteine 98 are joined by a disulfide bond. N-linked (GlcNAc...) asparagine glycosylation occurs at asparagine 139. A disulfide bond links cysteine 144 and cysteine 190. The N-linked (GlcNAc...) asparagine glycan is linked to asparagine 216. The chain crosses the membrane as a helical span at residues isoleucine 259 to serine 279. The Cytoplasmic segment spans residues arginine 280–methionine 325.

The protein belongs to the natural cytotoxicity receptor (NCR) family. As to quaternary structure, interacts with CD3Z and FCER1G. As to expression, weakly expressed in spleen, heart and lung.

It localises to the cell membrane. Functionally, cytotoxicity-activating receptor that may contribute to the increased efficiency of activated natural killer (NK) cells to mediate tumor cell lysis. The polypeptide is Natural cytotoxicity triggering receptor 1 (Ncr1) (Rattus norvegicus (Rat)).